A 503-amino-acid polypeptide reads, in one-letter code: MSKVTGKVAQIIGPVVDVVFDSENAELPKIYDSLEITRKDGSILVLEVQSHIGEQTVRTVSMDSTDGLSRGVDVLATGNPIQMPVGKDVYGRLFNVIGDAIDGLGNLPKAGEDGLPIHRQAPKFEDLSVSTEVLFTGIKVIDLIEPYSKGGKIGLFGGAGVGKTVLIQELINNIAKGHGGLSVFAGVGERTREGNDLLREMLESGIIKYGDDFMHSMEEGGWDLQKVDKEVMKESKATFVFGQMNEPPGARARVALSGLTIAEYFRDGAGEGQGKDVLFFVDNIFRFTQAGSEVSALLGRMPSAVGYQPTLATEMGAMQERITSTKNGSITSVQAVYVPADDLTDPAPATTFAHLDATTVLSRKIAELGIYPAVDPLDSTSRILTADILGDEHYDCAQRVKELLQRYKELQDIIAILGMEELSEEDKLAVSRARRVQRFLSQPFHVAEQFTGLKGVLVDIKDTIKGFNMIMDGELDKYPEAAFNLKGTIEEAIEAGEKMLAEN.

An ATP-binding site is contributed by 157-164 (GGAGVGKT).

The protein belongs to the ATPase alpha/beta chains family. As to quaternary structure, F-type ATPases have 2 components, CF(1) - the catalytic core - and CF(0) - the membrane proton channel. CF(1) has five subunits: alpha(3), beta(3), gamma(1), delta(1), epsilon(1). CF(0) has three main subunits: a(1), b(2) and c(9-12). The alpha and beta chains form an alternating ring which encloses part of the gamma chain. CF(1) is attached to CF(0) by a central stalk formed by the gamma and epsilon chains, while a peripheral stalk is formed by the delta and b chains.

The protein localises to the cell membrane. It carries out the reaction ATP + H2O + 4 H(+)(in) = ADP + phosphate + 5 H(+)(out). Produces ATP from ADP in the presence of a proton gradient across the membrane. The catalytic sites are hosted primarily by the beta subunits. The protein is ATP synthase subunit beta of Christiangramia forsetii (strain DSM 17595 / CGMCC 1.15422 / KT0803) (Gramella forsetii).